Consider the following 776-residue polypeptide: Transferrin receptor protein 1 (776 aa).

Residues 1-70 (MDHARAALSN…QPQRNGKRLC (70 aa)) are Cytoplasmic-facing. Positions 19-22 (YTRF) match the Endocytosis signal motif. The residue at position 23 (Ser-23) is a Phosphoserine. Residue Cys-70 is the site of S-palmitoyl cysteine attachment. The helical; Signal-anchor for type II membrane protein transmembrane segment at 71-91 (FLVIAAVLLLLIGFLIGYLSY) threads the bilayer. At 92 to 776 (RGRIELAARC…GDIWETDNEF (685 aa)) the chain is on the extracellular side. Positions 230 to 322 (SESGSVSGKP…GTGDPYTPGF (93 aa)) constitute a PA domain. N-linked (GlcNAc...) asparagine glycans are attached at residues Asn-261, Asn-326, and Asn-391. Residues 586–776 (KGDTLENLRK…GDIWETDNEF (191 aa)) are ligand-binding. Positions 662 to 664 (RGD) match the Cell attachment site motif. Asn-738 carries N-linked (GlcNAc...) asparagine glycosylation.

Belongs to the peptidase M28 family. M28B subfamily. Homodimer; disulfide-linked. Binds one transferrin molecule per subunit. In terms of processing, stearoylated. Stearoylation does not affect iron uptake. N- and O-glycosylated, phosphorylated and palmitoylated.

Its subcellular location is the cell membrane. The protein resides in the melanosome. Its function is as follows. Cellular uptake of iron occurs via receptor-mediated endocytosis of ligand-occupied transferrin receptor into specialized endosomes. Endosomal acidification leads to iron release. The apotransferrin-receptor complex is then recycled to the cell surface with a return to neutral pH and the concomitant loss of affinity of apotransferrin for its receptor. Transferrin receptor is necessary for development of erythrocytes and the nervous system. Acts as a lipid sensor that regulates mitochondrial fusion by regulating activation of the JNK pathway. When dietary levels of stearate (C18:0) are low, promotes activation of the JNK pathway, resulting in HUWE1-mediated ubiquitination and subsequent degradation of the mitofusin MFN2 and inhibition of mitochondrial fusion. When dietary levels of stearate (C18:0) are high, TFRC stearoylation inhibits activation of the JNK pathway and thus degradation of the mitofusin MFN2. Mediates uptake of NICOL1 into fibroblasts where it may regulate extracellular matrix production. The sequence is that of Transferrin receptor protein 1 (TFRC) from Gallus gallus (Chicken).